Reading from the N-terminus, the 23-residue chain is NADP-dependent malic enzyme (23 aa).

This sequence belongs to the malic enzymes family. In terms of assembly, homotetramer.

The enzyme catalyses (S)-malate + NADP(+) = pyruvate + CO2 + NADPH. It catalyses the reaction oxaloacetate + H(+) = pyruvate + CO2. In Populus euphratica (Euphrates poplar), this protein is NADP-dependent malic enzyme.